The primary structure comprises 89 residues: Small ribosomal subunit protein uS15 (89 aa).

Positions 1–24 are disordered; the sequence is MSLNAEQKSEIVEQFRRSPSDTGS. Over residues 7–19 the composition is skewed to basic and acidic residues; the sequence is QKSEIVEQFRRSP.

This sequence belongs to the universal ribosomal protein uS15 family. Part of the 30S ribosomal subunit. Forms a bridge to the 50S subunit in the 70S ribosome, contacting the 23S rRNA.

In terms of biological role, one of the primary rRNA binding proteins, it binds directly to 16S rRNA where it helps nucleate assembly of the platform of the 30S subunit by binding and bridging several RNA helices of the 16S rRNA. Its function is as follows. Forms an intersubunit bridge (bridge B4) with the 23S rRNA of the 50S subunit in the ribosome. This is Small ribosomal subunit protein uS15 from Halorhodospira halophila (strain DSM 244 / SL1) (Ectothiorhodospira halophila (strain DSM 244 / SL1)).